Reading from the N-terminus, the 1134-residue chain is Centrosomal protein of 131 kDa (1134 aa).

5 disordered regions span residues 111-131 (NSSESDYSLHKRTPDSSEEGE), 168-208 (DLPG…PLTL), 286-306 (ESSKQVEPTSPTPTLPKAPSS), 425-455 (VGKKKENVKPASADPIARSSKSKVTKSTINP), and 492-528 (DQKQYDGKHKPGLEDLDEAQDNDTASQLSLKSNEDSR). Residues 180 to 196 (MHADLDSSDCDNDKQEV) show a composition bias toward basic and acidic residues. The span at 494-504 (KQYDGKHKPGL) shows a compositional bias: basic and acidic residues. Over residues 513 to 522 (NDTASQLSLK) the composition is skewed to polar residues. Residues 732-1131 (LESQNQAWEH…AVIRQQRKDY (400 aa)) adopt a coiled-coil conformation.

The protein belongs to the CEP131 family. As to expression, expressed in chordotonal (Ch) neuronal precursors. Expressed in ciliated cells, like sensory neurons and spermatids.

The protein localises to the cytoplasm. The protein resides in the cytoskeleton. It is found in the microtubule organizing center. It localises to the centrosome. Its subcellular location is the cilium basal body. The protein localises to the centriole. In terms of biological role, cilium-specific protein with a role in cilium/flagellum formation. May be involved in transport of components into the growing cilium. In germ cells and sensory neurons, plays a role with Cby in the building of the transition zone necessary for the formation of the ciliary cap and for the correct elongation of the axoneme. This chain is Centrosomal protein of 131 kDa, found in Drosophila melanogaster (Fruit fly).